The chain runs to 295 residues: RNA polymerase sigma factor RpoH (295 aa).

The sigma-70 factor domain-2 stretch occupies residues 52–121; the sequence is MVTSHLRLVA…IQEYILRSWS (70 aa). Residues 76 to 79 carry the Interaction with polymerase core subunit RpoC motif; sequence EVIS. The tract at residues 230 to 281 is sigma-70 factor domain-4; that stretch reads AMVELTDRERHILTERRLKDDPTTLEELAAQYGVSRERVRQIEVRAFEKLQK. The segment at residues 254–273 is a DNA-binding region (H-T-H motif); it reads LEELAAQYGVSRERVRQIEV.

The protein belongs to the sigma-70 factor family. RpoH subfamily. As to quaternary structure, interacts with the RNA polymerase core enzyme.

Its subcellular location is the cytoplasm. Its function is as follows. Sigma factors are initiation factors that promote the attachment of RNA polymerase to specific initiation sites and are then released. This sigma factor is involved in regulation of expression of heat shock genes. The polypeptide is RNA polymerase sigma factor RpoH (Caulobacter vibrioides (strain ATCC 19089 / CIP 103742 / CB 15) (Caulobacter crescentus)).